The chain runs to 294 residues: Protoheme IX farnesyltransferase (294 aa).

9 helical membrane passes run 8–28 (LTKPGIVLGNLMSSAGGFLIA), 35–55 (YSLFITMIVGTALVIASGCVL), 81–101 (IFLNQSIFYAVILSIFGFLFL), 107–127 (VLTIYLSAIGLFIYVGVYSLW), 133–153 (IYSIMVGSISGAMPPVIGYCA), 163–183 (LMLLIIFSLWQIPHSHSIAIL), 209–226 (MVVYIIGFIIATILFTVM), 230–252 (SYIFLIIISIMNLWWLHMGFYGY), and 266–286 (FLLSLIIIISLNLLLSLDHIL).

This sequence belongs to the UbiA prenyltransferase family. Protoheme IX farnesyltransferase subfamily.

The protein resides in the cell inner membrane. It carries out the reaction heme b + (2E,6E)-farnesyl diphosphate + H2O = Fe(II)-heme o + diphosphate. Its pathway is porphyrin-containing compound metabolism; heme O biosynthesis; heme O from protoheme: step 1/1. In terms of biological role, converts heme B (protoheme IX) to heme O by substitution of the vinyl group on carbon 2 of heme B porphyrin ring with a hydroxyethyl farnesyl side group. The polypeptide is Protoheme IX farnesyltransferase (Blochmanniella pennsylvanica (strain BPEN)).